The following is a 195-amino-acid chain: Imidazoleglycerol-phosphate dehydratase (195 aa).

It belongs to the imidazoleglycerol-phosphate dehydratase family.

The protein localises to the cytoplasm. The catalysed reaction is D-erythro-1-(imidazol-4-yl)glycerol 3-phosphate = 3-(imidazol-4-yl)-2-oxopropyl phosphate + H2O. It functions in the pathway amino-acid biosynthesis; L-histidine biosynthesis; L-histidine from 5-phospho-alpha-D-ribose 1-diphosphate: step 6/9. The protein is Imidazoleglycerol-phosphate dehydratase of Bordetella avium (strain 197N).